The sequence spans 872 residues: MTDTSSSISRKSLRADSYQPQLIEEKWQNEWKISGLYKTREPKEDQKTFYALSMFPYPSGNLHMGHVRNYVITDVIARVHRMKGFSVLHPMGWDAFGLPAENAAIERNIQPDIWTEKNISHMRSQLDRLGLSIDWDREQTTSKSEYYKWTQSIFLKLYEAGLAYQKSATVNWDPVDKTVLANEQVDADGKSWRSGALVEKKQLKQWFLKITDYAEILLKDIDTLTEWPERVKTMQSNWIGKSVGVKINFQLLTKEKENLSVFTTRPDTLFGSTYLVLSPEDKLVDKLVDPKLINDLSNFRDYVSKLSDKERTAEGKPKNGMAIGAYAINPINQEKLPIWIADYVLSGYGTGAVMGVPAHDQRDLDFAQKYSLPIKYVIKPSGIIEKKKEVKAYSEVGVMINSGPFNGQKSDEVKSLITEKGIKENWAEKKTTYKLRDWLISRQRYWGCPIPIVHCAKCGIVPIEKENLPVFLPTNIQLSGKGNSPLKDNEWTKTQCPICKGIARRESDTMDTFICSSWYYLRFIDPNNKKNIIDKNLADRWMPVDQYVGGIEHAILHLLYARFITKVLRDKDMISIDEPFKKLLTQGMVQGITFKNPKTGKYIPPNKINNIKTPLDPSTGESLELIYEKMSKSKHNGIDPSTVIDKYGADTARMFILFKAPPEKDLEWDDADVEGQYRFLQRLWRLINESKTYNKLSLDSNENNNLNNLNQDEISLRRSVHLAIKEISNDLNEGNQFNTAISELMKLSNNMNELLGKCRISVVNESLSILIRILSPFAPHLAEEAWSTLKGKGSVHEQKWPEFDPNALKQDNYQLVIQMNGKVRGSIKIASETNKQEIEKIALNSDIAKKWLIDGSYKKVIVVLGKLVNIVY.

The 'HIGH' region motif lies at 56–66; that stretch reads PYPSGNLHMGH. Residues 629-633 carry the 'KMSKS' region motif; it reads KMSKS. Lys-632 lines the ATP pocket.

This sequence belongs to the class-I aminoacyl-tRNA synthetase family.

It localises to the cytoplasm. It catalyses the reaction tRNA(Leu) + L-leucine + ATP = L-leucyl-tRNA(Leu) + AMP + diphosphate. In Prochlorococcus marinus (strain MIT 9211), this protein is Leucine--tRNA ligase.